A 223-amino-acid polypeptide reads, in one-letter code: Chalcone--flavanone isomerase 2 (223 aa).

T41, N106, and S183 together coordinate substrate.

It belongs to the chalcone isomerase family.

It carries out the reaction a chalcone = a flavanone.. Its pathway is secondary metabolite biosynthesis; flavonoid biosynthesis. In terms of biological role, catalyzes the intramolecular cyclization of bicyclic chalcones into tricyclic (S)-flavanones. Responsible for the isomerization of 4,2',4',6'-tetrahydroxychalcone (also termed chalcone) into naringenin. This chain is Chalcone--flavanone isomerase 2 (CHI2), found in Arabidopsis thaliana (Mouse-ear cress).